The sequence spans 707 residues: Translation initiation factor eIF2B subunit epsilon (707 aa).

2 disordered regions span residues 489-526 and 686-707; these read HDDIESDESGDEGDKSGGKIKNNKNNDDNPIEPDSVKF and AEEESDDSDDSDDDDDDSDESD. The W2 domain occupies 516–693; it reads DNPIEPDSVK…KSAEEESDDS (178 aa). The segment covering 688 to 707 has biased composition (acidic residues); that stretch reads EESDDSDDSDDDDDDSDESD.

It belongs to the eIF-2B gamma/epsilon subunits family. In terms of assembly, component of the translation initiation factor 2B (eIF2B) complex which is a heterodecamer of two sets of five different subunits: alpha, beta, gamma, delta and epsilon. Subunits alpha, beta and delta comprise a regulatory subcomplex and subunits epsilon and gamma comprise a catalytic subcomplex. Within the complex, the hexameric regulatory complex resides at the center, with the two heterodimeric catalytic subcomplexes bound on opposite sides.

It is found in the cytoplasm. Its subcellular location is the cytosol. In terms of biological role, acts as a component of the translation initiation factor 2B (eIF2B) complex, which catalyzes the exchange of GDP for GTP on eukaryotic initiation factor 2 (eIF2) gamma subunit. Its guanine nucleotide exchange factor activity is repressed when bound to eIF2 complex phosphorylated on the alpha subunit, thereby limiting the amount of methionyl-initiator methionine tRNA available to the ribosome and consequently global translation is repressed. The chain is Translation initiation factor eIF2B subunit epsilon (eif2b5) from Dictyostelium discoideum (Social amoeba).